Consider the following 177-residue polypeptide: ATP synthase subunit delta (177 aa).

It belongs to the ATPase delta chain family. F-type ATPases have 2 components, F(1) - the catalytic core - and F(0) - the membrane proton channel. F(1) has five subunits: alpha(3), beta(3), gamma(1), delta(1), epsilon(1). F(0) has three main subunits: a(1), b(2) and c(10-14). The alpha and beta chains form an alternating ring which encloses part of the gamma chain. F(1) is attached to F(0) by a central stalk formed by the gamma and epsilon chains, while a peripheral stalk is formed by the delta and b chains.

It localises to the cell inner membrane. In terms of biological role, f(1)F(0) ATP synthase produces ATP from ADP in the presence of a proton or sodium gradient. F-type ATPases consist of two structural domains, F(1) containing the extramembraneous catalytic core and F(0) containing the membrane proton channel, linked together by a central stalk and a peripheral stalk. During catalysis, ATP synthesis in the catalytic domain of F(1) is coupled via a rotary mechanism of the central stalk subunits to proton translocation. This protein is part of the stalk that links CF(0) to CF(1). It either transmits conformational changes from CF(0) to CF(1) or is implicated in proton conduction. The sequence is that of ATP synthase subunit delta from Aliivibrio salmonicida (strain LFI1238) (Vibrio salmonicida (strain LFI1238)).